Reading from the N-terminus, the 189-residue chain is dCTP deaminase (189 aa).

DCTP contacts are provided by residues 112-117, 136-138, glutamine 157, tyrosine 171, and glutamine 181; these read KSTYAR and TLE. The active-site Proton donor/acceptor is glutamate 138.

This sequence belongs to the dCTP deaminase family. As to quaternary structure, homotrimer.

It catalyses the reaction dCTP + H2O + H(+) = dUTP + NH4(+). The protein operates within pyrimidine metabolism; dUMP biosynthesis; dUMP from dCTP (dUTP route): step 1/2. Catalyzes the deamination of dCTP to dUTP. The sequence is that of dCTP deaminase from Burkholderia orbicola (strain MC0-3).